A 424-amino-acid chain; its full sequence is Enolase (424 aa).

Gln163 is a binding site for (2R)-2-phosphoglycerate. The active-site Proton donor is Glu205. Mg(2+) contacts are provided by Asp242, Glu285, and Asp312. Residues Lys337, Arg366, Ser367, and Lys388 each coordinate (2R)-2-phosphoglycerate. The active-site Proton acceptor is Lys337.

It belongs to the enolase family. Requires Mg(2+) as cofactor.

The protein localises to the cytoplasm. It localises to the secreted. It is found in the cell surface. The catalysed reaction is (2R)-2-phosphoglycerate = phosphoenolpyruvate + H2O. The protein operates within carbohydrate degradation; glycolysis; pyruvate from D-glyceraldehyde 3-phosphate: step 4/5. Functionally, catalyzes the reversible conversion of 2-phosphoglycerate (2-PG) into phosphoenolpyruvate (PEP). It is essential for the degradation of carbohydrates via glycolysis. The chain is Enolase from Dinoroseobacter shibae (strain DSM 16493 / NCIMB 14021 / DFL 12).